A 406-amino-acid polypeptide reads, in one-letter code: MNDAPTPNSFRAGPDEDGRFGIYGGRFVAETLMPLILDLQAEWDKAKSDPEFQAELKYLGTHYTGRPSPLYFAERLTAELGGAKIYFKREELNHTGSHKINNCLGQILLAKRMGKTRIIAETGAGQHGVASATVAARFGLPCVVYMGATDVARQAPNVFRMKLLGAEVKPVTAGHGTLKDAMNEALRDWVTNVDDTYYLIGTAAGPHPYPEMVRDFQAVIGEEAKAQMLEAEGRLPDMIIAAVGGGSNAIGIFHPFLDDKNVRIVGVEAGGKGLSGEEHCASITAGSPGVLHGNRTYLLQDGDGQIKEGHSISAGLDYPGIGPEHSWLNDIGRVEYVPIMDHEALDAFQMLTRLEGIIPALEPSHALAEVIKRAPKMGKDEIILMNLSGRGDKDVHTVSKFLGMDV.

K99 is modified (N6-(pyridoxal phosphate)lysine).

This sequence belongs to the TrpB family. In terms of assembly, tetramer of two alpha and two beta chains. Pyridoxal 5'-phosphate is required as a cofactor.

The catalysed reaction is (1S,2R)-1-C-(indol-3-yl)glycerol 3-phosphate + L-serine = D-glyceraldehyde 3-phosphate + L-tryptophan + H2O. It participates in amino-acid biosynthesis; L-tryptophan biosynthesis; L-tryptophan from chorismate: step 5/5. In terms of biological role, the beta subunit is responsible for the synthesis of L-tryptophan from indole and L-serine. The chain is Tryptophan synthase beta chain (trpB) from Agrobacterium fabrum (strain C58 / ATCC 33970) (Agrobacterium tumefaciens (strain C58)).